We begin with the raw amino-acid sequence, 243 residues long: 2-C-methyl-D-erythritol 4-phosphate cytidylyltransferase (243 aa).

The protein belongs to the IspD/TarI cytidylyltransferase family. IspD subfamily. As to quaternary structure, homodimer.

It carries out the reaction 2-C-methyl-D-erythritol 4-phosphate + CTP + H(+) = 4-CDP-2-C-methyl-D-erythritol + diphosphate. It functions in the pathway isoprenoid biosynthesis; isopentenyl diphosphate biosynthesis via DXP pathway; isopentenyl diphosphate from 1-deoxy-D-xylulose 5-phosphate: step 2/6. Functionally, catalyzes the formation of 4-diphosphocytidyl-2-C-methyl-D-erythritol from CTP and 2-C-methyl-D-erythritol 4-phosphate (MEP). The chain is 2-C-methyl-D-erythritol 4-phosphate cytidylyltransferase from Photorhabdus laumondii subsp. laumondii (strain DSM 15139 / CIP 105565 / TT01) (Photorhabdus luminescens subsp. laumondii).